Consider the following 339-residue polypeptide: Phenylalanine--tRNA ligase alpha subunit (339 aa).

Glu-254 is a Mg(2+) binding site.

Belongs to the class-II aminoacyl-tRNA synthetase family. Phe-tRNA synthetase alpha subunit type 1 subfamily. In terms of assembly, tetramer of two alpha and two beta subunits. It depends on Mg(2+) as a cofactor.

It localises to the cytoplasm. The catalysed reaction is tRNA(Phe) + L-phenylalanine + ATP = L-phenylalanyl-tRNA(Phe) + AMP + diphosphate + H(+). The sequence is that of Phenylalanine--tRNA ligase alpha subunit from Acetivibrio thermocellus (strain ATCC 27405 / DSM 1237 / JCM 9322 / NBRC 103400 / NCIMB 10682 / NRRL B-4536 / VPI 7372) (Clostridium thermocellum).